The following is a 59-amino-acid chain: Large ribosomal subunit protein bL32 (59 aa).

It belongs to the bacterial ribosomal protein bL32 family.

The protein is Large ribosomal subunit protein bL32 of Polynucleobacter necessarius subsp. necessarius (strain STIR1).